A 150-amino-acid polypeptide reads, in one-letter code: 3-hydroxyacyl-[acyl-carrier-protein] dehydratase FabZ (150 aa).

H51 is an active-site residue.

Belongs to the thioester dehydratase family. FabZ subfamily.

The protein localises to the cytoplasm. It carries out the reaction a (3R)-hydroxyacyl-[ACP] = a (2E)-enoyl-[ACP] + H2O. In terms of biological role, involved in unsaturated fatty acids biosynthesis. Catalyzes the dehydration of short chain beta-hydroxyacyl-ACPs and long chain saturated and unsaturated beta-hydroxyacyl-ACPs. In Legionella pneumophila (strain Lens), this protein is 3-hydroxyacyl-[acyl-carrier-protein] dehydratase FabZ.